The sequence spans 275 residues: Formamidopyrimidine-DNA glycosylase (275 aa).

The Schiff-base intermediate with DNA role is filled by Pro2. The active-site Proton donor is the Glu3. Catalysis depends on Lys58, which acts as the Proton donor; for beta-elimination activity. Residues His93, Arg111, and Arg156 each coordinate DNA. Residues Phe241–Arg275 form an FPG-type zinc finger. Arg265 serves as the catalytic Proton donor; for delta-elimination activity.

It belongs to the FPG family. In terms of assembly, monomer. It depends on Zn(2+) as a cofactor.

It carries out the reaction Hydrolysis of DNA containing ring-opened 7-methylguanine residues, releasing 2,6-diamino-4-hydroxy-5-(N-methyl)formamidopyrimidine.. The catalysed reaction is 2'-deoxyribonucleotide-(2'-deoxyribose 5'-phosphate)-2'-deoxyribonucleotide-DNA = a 3'-end 2'-deoxyribonucleotide-(2,3-dehydro-2,3-deoxyribose 5'-phosphate)-DNA + a 5'-end 5'-phospho-2'-deoxyribonucleoside-DNA + H(+). In terms of biological role, involved in base excision repair of DNA damaged by oxidation or by mutagenic agents. Acts as a DNA glycosylase that recognizes and removes damaged bases. Has a preference for oxidized purines, such as 7,8-dihydro-8-oxoguanine (8-oxoG). Has AP (apurinic/apyrimidinic) lyase activity and introduces nicks in the DNA strand. Cleaves the DNA backbone by beta-delta elimination to generate a single-strand break at the site of the removed base with both 3'- and 5'-phosphates. The polypeptide is Formamidopyrimidine-DNA glycosylase (Burkholderia lata (strain ATCC 17760 / DSM 23089 / LMG 22485 / NCIMB 9086 / R18194 / 383)).